The primary structure comprises 370 residues: Spermidine/putrescine import ATP-binding protein PotA (370 aa).

One can recognise an ABC transporter domain in the interval 6-236 (IELHQVTKRY…PINHFVADFI (231 aa)). ATP is bound at residue 38–45 (GPSGCGKT).

This sequence belongs to the ABC transporter superfamily. Spermidine/putrescine importer (TC 3.A.1.11.1) family. As to quaternary structure, the complex is composed of two ATP-binding proteins (PotA), two transmembrane proteins (PotB and PotC) and a solute-binding protein (PotD).

The protein resides in the cell membrane. The catalysed reaction is ATP + H2O + polyamine-[polyamine-binding protein]Side 1 = ADP + phosphate + polyamineSide 2 + [polyamine-binding protein]Side 1.. In terms of biological role, part of the ABC transporter complex PotABCD involved in spermidine/putrescine import. Responsible for energy coupling to the transport system. The protein is Spermidine/putrescine import ATP-binding protein PotA of Levilactobacillus brevis (strain ATCC 367 / BCRC 12310 / CIP 105137 / JCM 1170 / LMG 11437 / NCIMB 947 / NCTC 947) (Lactobacillus brevis).